Reading from the N-terminus, the 931-residue chain is GPI ethanolamine phosphate transferase 1 (931 aa).

Met-1 is a topological domain (cytoplasmic). The chain crosses the membrane as a helical span at residues Leu-2–Phe-24. Topologically, residues Thr-25–Phe-442 are lumenal. 3 N-linked (GlcNAc...) asparagine glycosylation sites follow: Asn-128, Asn-192, and Asn-350. A helical membrane pass occupies residues Leu-443 to Ile-463. Residues Lys-464–His-482 are Cytoplasmic-facing. The helical transmembrane segment at Leu-483–Ala-503 threads the bilayer. The Lumenal portion of the chain corresponds to Cys-504–Tyr-508. Residues Tyr-509 to Ile-529 traverse the membrane as a helical segment. Residues Gln-530–His-543 lie on the Cytoplasmic side of the membrane. The chain crosses the membrane as a helical span at residues Phe-544 to Tyr-564. Residue Arg-565 is a topological domain, lumenal. The helical transmembrane segment at Tyr-566–Thr-586 threads the bilayer. The Cytoplasmic segment spans residues Arg-587–Thr-591. A helical membrane pass occupies residues Ser-592–Gly-612. Residues Arg-613 to Ser-618 are Lumenal-facing. Residues Leu-619 to Met-639 form a helical membrane-spanning segment. At Lys-640–Glu-649 the chain is on the cytoplasmic side. The helical transmembrane segment at Leu-650 to Thr-670 threads the bilayer. Residues Gln-671–Gln-685 are Lumenal-facing. A helical membrane pass occupies residues Ile-686–Leu-706. Residues Phe-707–Leu-723 are Cytoplasmic-facing. The helical transmembrane segment at Leu-724–Ile-744 threads the bilayer. Over Asn-745 to Arg-786 the chain is Lumenal. A helical transmembrane segment spans residues Ala-787–Ile-807. The Cytoplasmic portion of the chain corresponds to Asn-808 to Pro-824. The chain crosses the membrane as a helical span at residues Phe-825–Ala-845. Residues Phe-846–Lys-858 lie on the Lumenal side of the membrane. The helical transmembrane segment at Ser-859–Val-879 threads the bilayer. The Cytoplasmic segment spans residues Lys-880–His-894. A helical transmembrane segment spans residues Tyr-895–Leu-915. Over Thr-916 to Met-931 the chain is Lumenal.

The protein belongs to the PIGG/PIGN/PIGO family. PIGN subfamily.

The protein resides in the endoplasmic reticulum membrane. It participates in glycolipid biosynthesis; glycosylphosphatidylinositol-anchor biosynthesis. In terms of biological role, ethanolamine phosphate transferase that catalyzes an ethanolamine phosphate (EtNP) transfer from phosphatidylethanolamine (PE) to the 2-OH position of the first alpha-1,4-linked mannose of the alpha-D-Man-(1-&gt;6)-alpha-D-Man-(1-&gt;4)-alpha-D-GlcN-(1-&gt;6)-(1-radyl,2-acyl-sn-glycero-3-phospho)-2-acyl-inositol (also termed H3) intermediate to generate an alpha-D-Man-(1-&gt;6)-2-PEtn-alpha-D-Man-(1-&gt;4)-alpha-D-GlcN-(1-&gt;6)-(1-radyl,2-acyl-sn-glycero-3-phospho)-2-acyl-inositol and participates in the eighth step of the glycosylphosphatidylinositol-anchor biosynthesis. May act as suppressor of replication stress and chromosome missegregation. The polypeptide is GPI ethanolamine phosphate transferase 1 (Homo sapiens (Human)).